A 376-amino-acid polypeptide reads, in one-letter code: Phytanoyl-CoA hydroxylase-interacting protein-like (376 aa).

Phosphoserine occurs at positions 12 and 15. N23 carries an N-linked (GlcNAc...) asparagine glycan. S25 is subject to Phosphoserine. A glycan (N-linked (GlcNAc...) asparagine) is linked at N37. The Fibronectin type-III domain occupies 52 to 161 (VPHNIKISNI…EIIEFCTADY (110 aa)).

This sequence belongs to the PHYHIP family.

Functionally, may play a role in the development of the central system. This Homo sapiens (Human) protein is Phytanoyl-CoA hydroxylase-interacting protein-like (PHYHIPL).